The chain runs to 428 residues: Adenylosuccinate synthetase (428 aa).

GTP is bound by residues 11–17 (GDEGKGK) and 39–41 (GHT). Asp12 acts as the Proton acceptor in catalysis. Residues Asp12 and Gly39 each contribute to the Mg(2+) site. IMP contacts are provided by residues 12 to 15 (DEGK), 37 to 40 (NAGH), Thr130, Arg144, Asn226, Thr241, and Arg305. Catalysis depends on His40, which acts as the Proton donor. 301–307 (VTTGRKR) serves as a coordination point for substrate. GTP-binding positions include Arg307, 333–335 (KLD), and 415–417 (GTG).

It belongs to the adenylosuccinate synthetase family. In terms of assembly, homodimer. Mg(2+) serves as cofactor.

It localises to the cytoplasm. The catalysed reaction is IMP + L-aspartate + GTP = N(6)-(1,2-dicarboxyethyl)-AMP + GDP + phosphate + 2 H(+). The protein operates within purine metabolism; AMP biosynthesis via de novo pathway; AMP from IMP: step 1/2. Plays an important role in the de novo pathway and in the salvage pathway of purine nucleotide biosynthesis. Catalyzes the first committed step in the biosynthesis of AMP from IMP. This chain is Adenylosuccinate synthetase, found in Lodderomyces elongisporus (strain ATCC 11503 / CBS 2605 / JCM 1781 / NBRC 1676 / NRRL YB-4239) (Yeast).